The primary structure comprises 84 residues: uncharacterized protein (84 aa).

The 83-residue stretch at 2–84 (ARVTLRITGT…RAKGDIEIEM (83 aa)) folds into the 2Fe-2S ferredoxin-type domain. Cys37, Cys42, Cys45, and Cys74 together coordinate [2Fe-2S] cluster.

It depends on [2Fe-2S] cluster as a cofactor.

This is an uncharacterized protein from Escherichia coli O6:H1 (strain CFT073 / ATCC 700928 / UPEC).